The following is a 231-amino-acid chain: NADH-ubiquinone oxidoreductase chain 4 (231 aa).

The next 6 helical transmembrane spans lie at Pro-1–Ile-21, Val-34–Leu-54, Ser-61–Ile-80, Trp-84–Leu-106, Ile-118–Leu-138, and Thr-169–Leu-189.

This sequence belongs to the complex I subunit 4 family.

The protein localises to the mitochondrion membrane. It catalyses the reaction a ubiquinone + NADH + 5 H(+)(in) = a ubiquinol + NAD(+) + 4 H(+)(out). Core subunit of the mitochondrial membrane respiratory chain NADH dehydrogenase (Complex I) that is believed to belong to the minimal assembly required for catalysis. Complex I functions in the transfer of electrons from NADH to the respiratory chain. The immediate electron acceptor for the enzyme is believed to be ubiquinone. This Porthidium nasutum (Hognosed pitviper) protein is NADH-ubiquinone oxidoreductase chain 4 (MT-ND4).